Here is a 465-residue protein sequence, read N- to C-terminus: Uridine kinase-like protein 5 (465 aa).

Positions 26–230 are uridine kinase; sequence LKQPFVIGVA…IVQHIRTKLC (205 aa). Positions 240–465 are uracil phosphoribosyltransferase; that stretch reads NIFIISSTFQ…SLSTNLKLRS (226 aa). Residues K264, R273, and 307–310 contribute to the GTP site; that span reads CKRL. 5-phospho-alpha-D-ribose 1-diphosphate is bound by residues R317 and R342. GTP is bound at residue R362. 5-phospho-alpha-D-ribose 1-diphosphate is bound by residues D368, 373 to 376, and E439; that span reads SGYS. 438–440 provides a ligand contact to uracil; that stretch reads GEF.

The protein in the N-terminal section; belongs to the uridine kinase family. It in the C-terminal section; belongs to the UPRTase family. The cofactor is Mg(2+).

The catalysed reaction is UMP + diphosphate = 5-phospho-alpha-D-ribose 1-diphosphate + uracil. The enzyme catalyses cytidine + ATP = CMP + ADP + H(+). It catalyses the reaction uridine + ATP = UMP + ADP + H(+). It functions in the pathway pyrimidine metabolism; UMP biosynthesis via salvage pathway; UMP from uracil: step 1/1. The protein operates within pyrimidine metabolism; CTP biosynthesis via salvage pathway; CTP from cytidine: step 1/3. Its pathway is pyrimidine metabolism; UMP biosynthesis via salvage pathway; UMP from uridine: step 1/1. Allosterically activated by GTP. Involved in the pyrimidine salvage pathway. This Arabidopsis thaliana (Mouse-ear cress) protein is Uridine kinase-like protein 5 (UKL5).